Reading from the N-terminus, the 94-residue chain is Trp operon repressor homolog (94 aa).

The DNA-binding element occupies 58–81; the sequence is QREIAEKYGVSIAQITRGSNALKG.

It belongs to the TrpR family. Homodimer.

It localises to the cytoplasm. Its function is as follows. This protein is an aporepressor. When complexed with L-tryptophan it binds the operator region of the trp operon and prevents the initiation of transcription. The chain is Trp operon repressor homolog from Chlamydia trachomatis serovar L2 (strain ATCC VR-902B / DSM 19102 / 434/Bu).